Consider the following 140-residue polypeptide: Endoribonuclease YbeY (140 aa).

3 residues coordinate Zn(2+): His100, His104, and His110.

Belongs to the endoribonuclease YbeY family. Zn(2+) is required as a cofactor.

Its subcellular location is the cytoplasm. Functionally, single strand-specific metallo-endoribonuclease involved in late-stage 70S ribosome quality control and in maturation of the 3' terminus of the 16S rRNA. This Helicobacter pylori (strain Shi470) protein is Endoribonuclease YbeY.